A 294-amino-acid chain; its full sequence is MSNKGTERVKRGMAEMQKGGVIMDVVNAEQAKIAEEAGAVAVMALERVPADIRAAGGVARMADPRIVEEVQNAVTIPVMAKARIGHIVEARVLEALGVDYIDESEVLTPADEEFHLNKNEYTVPFVCGCRDLGEATRRIAEGASMLRTKGEPGTGNIVEAVRHMRKVNAQIRKVAAMSEDELMTEAKNLGAPYELLLQIKKDGKLPVVNFAAGGVATPADAALMMQLGADGVFVGSGIFKSDNPAKFAKAIVEATTHFTDYGLIAELSKELGTAMKGIEISNLLPEERMQERGW.

Aspartate 24 is a binding site for D-ribose 5-phosphate. The Schiff-base intermediate with D-ribose 5-phosphate role is filled by lysine 81. Glycine 153 contacts D-ribose 5-phosphate. Position 165 (arginine 165) interacts with D-glyceraldehyde 3-phosphate. Residues glycine 214 and 235-236 (GS) each bind D-ribose 5-phosphate.

It belongs to the PdxS/SNZ family. In terms of assembly, in the presence of PdxT, forms a dodecamer of heterodimers.

It carries out the reaction aldehydo-D-ribose 5-phosphate + D-glyceraldehyde 3-phosphate + L-glutamine = pyridoxal 5'-phosphate + L-glutamate + phosphate + 3 H2O + H(+). It functions in the pathway cofactor biosynthesis; pyridoxal 5'-phosphate biosynthesis. In terms of biological role, catalyzes the formation of pyridoxal 5'-phosphate from ribose 5-phosphate (RBP), glyceraldehyde 3-phosphate (G3P) and ammonia. The ammonia is provided by the PdxT subunit. Can also use ribulose 5-phosphate and dihydroxyacetone phosphate as substrates, resulting from enzyme-catalyzed isomerization of RBP and G3P, respectively. The polypeptide is Pyridoxal 5'-phosphate synthase subunit PdxS (Bacillus pumilus (strain SAFR-032)).